The primary structure comprises 197 residues: MQRWKAAALASVLCSSVLSIWMCREGLLLSHRLGPALVPLHRLPRTLDARIARLAQYRALLQGAPDAMELRELTPWAGRPPGPRRRAGPRRRRARARLGARPCGLRELEVRVSELGLGYASDETVLFRYCAGACEAAARVYDLGLRRLRQRRRLRRERVRAQPCCRPTAYEDEVSFLDAHSRYHTVHELSARECACV.

The signal sequence occupies residues methionine 1–serine 19. The propeptide occupies isoleucine 20–arginine 95. The segment at threonine 74 to arginine 93 is disordered. The segment covering glycine 82–arginine 93 has biased composition (basic residues). 3 disulfides stabilise this stretch: cysteine 103–cysteine 165, cysteine 130–cysteine 194, and cysteine 134–cysteine 196. 4 residues coordinate heparan sulfate group: arginine 149, arginine 158, arginine 160, and glutamine 162.

Belongs to the TGF-beta family. GDNF subfamily. Homodimer; disulfide-linked. Interacts with GFRA2 coreceptor and RET: forms a 2:2:2 ternary complex composed of NRTN ligand, GFRA2 and RET receptor. Also forms a 4:4:4 tetrameric complex composed of 4 copies of NRTN ligand, GFRA2 and RET receptor, which prevents endocytosis of RET.

It localises to the secreted. Functionally, growth factor that supports the survival of sympathetic neurons in culture. May regulate the development and maintenance of the CNS. Involved in the development of the neural crest. Might control the size of non-neuronal cell population such as haemopoietic cells. Acts by binding to its coreceptor, GFRA2, leading to autophosphorylation and activation of the RET receptor. Heparan sulfate-binding is required for signaling. This Homo sapiens (Human) protein is Neurturin.